The sequence spans 20 residues: Protein PR-L5 (20 aa).

This sequence belongs to the BetVI family.

The protein is Protein PR-L5 of Lupinus luteus (European yellow lupine).